A 392-amino-acid chain; its full sequence is Speckle-type POZ protein-like (392 aa).

One can recognise an MATH domain in the interval 31–161 (KFSYMWTINN…DDKLTLFCEV (131 aa)). The BTB domain occupies 200–267 (TDCSFFVRGQ…IYTGRAPNLD (68 aa)).

The protein belongs to the Tdpoz family. Homodimer. Heterodimer with SPOP. Component of cullin-RING-based BCR (BTB-CUL3-RBX1) E3 ubiquitin-protein ligase complexes containing homodimeric SPOPL or the heterodimer formed by SPOP and SPOPL. Interacts with CUL3 and MACROH2A1.

It localises to the nucleus. Its pathway is protein modification; protein ubiquitination. Its function is as follows. Component of a cullin-RING-based BCR (BTB-CUL3-RBX1) E3 ubiquitin-protein ligase complex that mediates the ubiquitination and subsequent proteasomal degradation of target proteins, but with relatively low efficiency. Cullin-RING-based BCR (BTB-CUL3-RBX1) E3 ubiquitin-protein ligase complexes containing homodimeric SPOPL or the heterodimer formed by SPOP and SPOPL are less efficient than ubiquitin ligase complexes containing only SPOP. May function to down-regulate the activity of cullin-RING-based BCR (BTB-CUL3-RBX1) E3 ubiquitin-protein ligase complexes that contain SPOP. The chain is Speckle-type POZ protein-like (SPOPL) from Homo sapiens (Human).